A 122-amino-acid chain; its full sequence is Large ribosomal subunit protein bL12 (122 aa).

Belongs to the bacterial ribosomal protein bL12 family. As to quaternary structure, homodimer. Part of the ribosomal stalk of the 50S ribosomal subunit. Forms a multimeric L10(L12)X complex, where L10 forms an elongated spine to which 2 to 4 L12 dimers bind in a sequential fashion. Binds GTP-bound translation factors.

In terms of biological role, forms part of the ribosomal stalk which helps the ribosome interact with GTP-bound translation factors. Is thus essential for accurate translation. The sequence is that of Large ribosomal subunit protein bL12 from Neisseria lactamica.